The primary structure comprises 61 residues: Temporin-MT3 (61 aa).

Residues 1–22 (MFTLKKPLLLLFFLGTINLSLC) form the signal peptide. A propeptide spans 23–44 (EQERNAEEERRDEPDERNAEVE) (removed in mature form). L59 bears the Leucine amide mark.

This sequence belongs to the frog skin active peptide (FSAP) family. Temporin subfamily. As to expression, expressed by the skin glands.

It is found in the secreted. Its function is as follows. Antimicrobial peptide. The chain is Temporin-MT3 from Amolops mantzorum (Sichuan torrent frog).